The primary structure comprises 233 residues: 2-C-methyl-D-erythritol 4-phosphate cytidylyltransferase (233 aa).

This sequence belongs to the IspD/TarI cytidylyltransferase family. IspD subfamily.

The enzyme catalyses 2-C-methyl-D-erythritol 4-phosphate + CTP + H(+) = 4-CDP-2-C-methyl-D-erythritol + diphosphate. It functions in the pathway isoprenoid biosynthesis; isopentenyl diphosphate biosynthesis via DXP pathway; isopentenyl diphosphate from 1-deoxy-D-xylulose 5-phosphate: step 2/6. In terms of biological role, catalyzes the formation of 4-diphosphocytidyl-2-C-methyl-D-erythritol from CTP and 2-C-methyl-D-erythritol 4-phosphate (MEP). The polypeptide is 2-C-methyl-D-erythritol 4-phosphate cytidylyltransferase (Thiobacillus denitrificans (strain ATCC 25259 / T1)).